The sequence spans 433 residues: Phosphomethylpyrimidine synthase (433 aa).

Residues N68, M97, Y126, H162, 184–186 (SRG), 225–228 (DALR), and E264 contribute to the substrate site. Residue H268 coordinates Zn(2+). Y291 serves as a coordination point for substrate. Residue H332 participates in Zn(2+) binding. [4Fe-4S] cluster is bound by residues C408, C411, and C415.

Belongs to the ThiC family. Requires [4Fe-4S] cluster as cofactor.

It carries out the reaction 5-amino-1-(5-phospho-beta-D-ribosyl)imidazole + S-adenosyl-L-methionine = 4-amino-2-methyl-5-(phosphooxymethyl)pyrimidine + CO + 5'-deoxyadenosine + formate + L-methionine + 3 H(+). The protein operates within cofactor biosynthesis; thiamine diphosphate biosynthesis. In terms of biological role, catalyzes the synthesis of the hydroxymethylpyrimidine phosphate (HMP-P) moiety of thiamine from aminoimidazole ribotide (AIR) in a radical S-adenosyl-L-methionine (SAM)-dependent reaction. The protein is Phosphomethylpyrimidine synthase of Fusobacterium nucleatum subsp. nucleatum (strain ATCC 25586 / DSM 15643 / BCRC 10681 / CIP 101130 / JCM 8532 / KCTC 2640 / LMG 13131 / VPI 4355).